The primary structure comprises 248 residues: PF03932 family protein CutC (248 aa).

This sequence belongs to the CutC family. As to quaternary structure, homodimer.

Its subcellular location is the cytoplasm. In Shigella dysenteriae serotype 1 (strain Sd197), this protein is PF03932 family protein CutC.